Here is a 234-residue protein sequence, read N- to C-terminus: UPF0758 protein STH371 (234 aa).

In terms of domain architecture, MPN spans 110 to 232 (DLCNPRAVFE…YTSFRERGLL (123 aa)). 3 residues coordinate Zn(2+): H181, H183, and D194. The JAMM motif signature appears at 181–194 (HNHPSGDPTPSRED).

Belongs to the UPF0758 family.

The sequence is that of UPF0758 protein STH371 from Symbiobacterium thermophilum (strain DSM 24528 / JCM 14929 / IAM 14863 / T).